We begin with the raw amino-acid sequence, 332 residues long: L-lactate dehydrogenase (332 aa).

NAD(+) contacts are provided by residues 29–57 (GQVGMASAFSILAQNVSKEVCLIDVCADK) and R99. Substrate contacts are provided by R106, N138, and R169. NAD(+) is bound at residue N138. H193 serves as the catalytic Proton acceptor. T248 serves as a coordination point for substrate.

It belongs to the LDH/MDH superfamily. LDH family. Homotetramer.

The protein resides in the cytoplasm. The enzyme catalyses (S)-lactate + NAD(+) = pyruvate + NADH + H(+). It participates in fermentation; pyruvate fermentation to lactate; (S)-lactate from pyruvate: step 1/1. The chain is L-lactate dehydrogenase from Drosophila melanogaster (Fruit fly).